Consider the following 237-residue polypeptide: Proteasome subunit alpha type-5 (237 aa).

It belongs to the peptidase T1A family. In terms of assembly, the 26S proteasome consists of a 20S proteasome core and two 19S regulatory subunits. The 20S proteasome core is composed of 28 subunits that are arranged in four stacked rings, resulting in a barrel-shaped structure. The two end rings are each formed by seven alpha subunits, and the two central rings are each formed by seven beta subunits. The catalytic chamber with the active sites is on the inside of the barrel.

It localises to the cytoplasm. It is found in the nucleus. The proteasome is a multicatalytic proteinase complex which is characterized by its ability to cleave peptides with Arg, Phe, Tyr, Leu, and Glu adjacent to the leaving group at neutral or slightly basic pH. The proteasome has an ATP-dependent proteolytic activity. This is Proteasome subunit alpha type-5 (PAE1) from Oryza sativa subsp. japonica (Rice).